The primary structure comprises 289 residues: Sphingomyelinase D (289 aa).

A signal peptide spans 1-22 (MQSISVLICVLLALSILNFTVA). Residue histidine 34 is part of the active site. Mg(2+) contacts are provided by glutamate 54, aspartate 56, and aspartate 103. Positions 282–289 (ATEDDAPW) match the SMD-tail motif.

It belongs to the sphingomyelinase D/phospholipase D family. Mg(2+) is required as a cofactor.

Its subcellular location is the secreted. It catalyses the reaction a sphingomyelin + H2O = an N-acylsphing-4-enine 1-phosphate + choline + H(+). Its activity is regulated as follows. Sphingomyelinase activity is reduced by 33 percent following addition of EDTA. Catalyzes the hydrolysis of sphingomyelin. Sphingomyelinases D are produced by some spider in their venoms, but also by arthropods such as ticks, or pathogenic bacteria and fungi. They might play a role in pathogenicity through different mechanisms, such as membrane destabilization and host cell penetration, but also pulmonary inflammation and cutaneous lesions. In Aspergillus flavus (strain ATCC 200026 / FGSC A1120 / IAM 13836 / NRRL 3357 / JCM 12722 / SRRC 167), this protein is Sphingomyelinase D.